Consider the following 212-residue polypeptide: MDLQAMRREYGLGSLHREQLEADPVKQFEKWMQQAIDSNLLSDPTAMTLATVDAEHMPSQRIVLLKGYDHTGFRFYTNKNSHKGQDISENPQVALHFAWLPLERQISIIGSAVPLDDDDNDRYFHSRPKESQVAALASQQSRPVESRDVLESHYQSLLKDYENTEVPRPQSWGGYCVHPKQFEFWQGGQHRLHDRYQYSKDRENWRITRLQP.

Residues 7-10 and lysine 66 each bind substrate; that span reads RREY. Residues 61–66, 76–77, lysine 83, and glutamine 105 contribute to the FMN site; these read RIVLLK and YT. Positions 123, 127, and 131 each coordinate substrate. FMN is bound by residues 140–141 and tryptophan 185; that span reads QS. 191–193 serves as a coordination point for substrate; the sequence is RLH. Residue arginine 195 participates in FMN binding.

The protein belongs to the pyridoxamine 5'-phosphate oxidase family. As to quaternary structure, homodimer. FMN is required as a cofactor.

The enzyme catalyses pyridoxamine 5'-phosphate + O2 + H2O = pyridoxal 5'-phosphate + H2O2 + NH4(+). It carries out the reaction pyridoxine 5'-phosphate + O2 = pyridoxal 5'-phosphate + H2O2. Its pathway is cofactor metabolism; pyridoxal 5'-phosphate salvage; pyridoxal 5'-phosphate from pyridoxamine 5'-phosphate: step 1/1. The protein operates within cofactor metabolism; pyridoxal 5'-phosphate salvage; pyridoxal 5'-phosphate from pyridoxine 5'-phosphate: step 1/1. Functionally, catalyzes the oxidation of either pyridoxine 5'-phosphate (PNP) or pyridoxamine 5'-phosphate (PMP) into pyridoxal 5'-phosphate (PLP). The protein is Pyridoxine/pyridoxamine 5'-phosphate oxidase of Idiomarina loihiensis (strain ATCC BAA-735 / DSM 15497 / L2-TR).